A 418-amino-acid chain; its full sequence is Zinc metalloproteinase-disintegrin-like batroxstatin-2 (418 aa).

In terms of domain architecture, Peptidase M12B spans 10–206 (KYVKLVLVAD…DMPQCILEKP (197 aa)). Disulfide bonds link cysteine 121–cysteine 201, cysteine 161–cysteine 185, and cysteine 163–cysteine 168. Histidine 146 serves as a coordination point for Zn(2+). The active site involves glutamate 147. Residues histidine 150 and histidine 156 each contribute to the Zn(2+) site. One can recognise a Disintegrin domain in the interval 214–299 (PPVCGNYFVE…AECTDRFQRN (86 aa)). Ca(2+)-binding residues include valine 216, asparagine 219, phenylalanine 221, glutamate 223, glutamate 226, and aspartate 229. 14 disulfides stabilise this stretch: cysteine 217–cysteine 246, cysteine 228–cysteine 241, cysteine 230–cysteine 236, cysteine 240–cysteine 263, cysteine 254–cysteine 260, cysteine 259–cysteine 285, cysteine 272–cysteine 292, cysteine 279–cysteine 310, cysteine 303–cysteine 315, cysteine 322–cysteine 372, cysteine 337–cysteine 383, cysteine 350–cysteine 360, cysteine 367–cysteine 409, and cysteine 403–cysteine 414. A D/ECD-tripeptide motif is present at residues 278-280 (ECD). Aspartate 280, methionine 281, aspartate 283, aspartate 294, and arginine 295 together coordinate Ca(2+). The N-linked (GlcNAc...) asparagine glycan is linked to asparagine 312.

Belongs to the venom metalloproteinase (M12B) family. P-III subfamily. P-IIIc sub-subfamily. Homodimer; disulfide-linked. Zn(2+) is required as a cofactor. As to expression, expressed by the venom gland.

It localises to the secreted. Functionally, snake venom zinc metalloprotease that induces apoptosis in vascular endothelial cells (VEC), without degrading the extracellular matrix (it cannot cleave collagen) or inhibiting adhesion of VEC. Has also fibrinogenolytic and hemorrhagic activities. The polypeptide is Zinc metalloproteinase-disintegrin-like batroxstatin-2 (Bothrops atrox (Barba amarilla)).